Here is a 219-residue protein sequence, read N- to C-terminus: Polysialic acid transport ATP-binding protein KpsT (219 aa).

The region spanning 2–218 (IKIENLTKSY…TEAIADYKKD (217 aa)) is the ABC transporter domain. An ATP-binding site is contributed by 38–45 (GQNGAGKS).

The protein belongs to the ABC transporter superfamily.

Its subcellular location is the cell inner membrane. In terms of biological role, putative ATP-binding protein, and an energy coupling component for the transport of polysialic acid across the cytoplasmic membrane. The chain is Polysialic acid transport ATP-binding protein KpsT (kpsT) from Escherichia coli.